The chain runs to 617 residues: Sodium-coupled monocarboxylate transporter 2 (617 aa).

Over 1–5 (MEVKN) the chain is Extracellular. Residues 6–26 (FAVWDYVVFAALFIISSGIGV) traverse the membrane as a helical segment. Residues 27–47 (FYAIKERKKATSREFLVGGRQ) lie on the Cytoplasmic side of the membrane. The helical transmembrane segment at 48 to 68 (MSFGPVALSLTASFMSAVTVL) threads the bilayer. Residues 69 to 80 (GTPADVYRFGAS) are Extracellular-facing. A helical transmembrane segment spans residues 81 to 101 (FVLFFITYGLVIILTSELFLP). The Cytoplasmic portion of the chain corresponds to 102–128 (VFYRSGITSTYEYLQLRFNKPVRYAAT). The helical transmembrane segment at 129–149 (VIYIVQTILYTGVVVYAPALA) threads the bilayer. Residues 150–157 (LNQVTGFD) are Extracellular-facing. A helical membrane pass occupies residues 158 to 178 (LWGSVFATGIVCTFYCTLGGL). At 179-180 (KA) the chain is on the cytoplasmic side. A helical transmembrane segment spans residues 181-201 (VVWTDAFQMVVMIVGFLTVLI). Topologically, residues 202-235 (QGSTYAGGLHNVLEQAENGSRLNIFDFDIDPLRR) are extracellular. An N-linked (GlcNAc...) asparagine glycan is attached at Asn-219. The chain crosses the membrane as a helical span at residues 236–256 (HTFWTISVGGTFTWLGIYGVN). At 257–273 (QSTIQRCISCKTEKHAK) the chain is on the cytoplasmic side. A helical membrane pass occupies residues 274-294 (LALYFNLLGLWIILLCAVFSG). At 295 to 334 (LTMYAHFKDCDPWTSGIISAPDQLMPYFVMELFSTMPGLP) the chain is on the extracellular side. A helical membrane pass occupies residues 335–357 (GLFVACAFSGTLSTVAASINALA). The Cytoplasmic portion of the chain corresponds to 358-385 (TVTFEDFVKSCFPRLSDKLSTWISKGLC). A helical membrane pass occupies residues 386 to 406 (LLFGVICTSTAVAASLMGGVI). Over 407–411 (QAALS) the chain is Extracellular. Residues 412 to 432 (IHGMCGGPMLGLFSLGILFPF) form a helical membrane-spanning segment. The Cytoplasmic portion of the chain corresponds to 433-437 (VNWKG). Residues 438-458 (ALAGLLTGILLSFWVAIGAFI) traverse the membrane as a helical segment. Residues 459-507 (YPAPASKTWPLPLSTDQCGLSNVTESVPPVLSSRPAIAETWYALSYLHY) lie on the Extracellular side of the membrane. An N-linked (GlcNAc...) asparagine glycan is attached at Asn-480. The chain crosses the membrane as a helical span at residues 508–528 (STVGCLGCIAAGVIISFLTGL). The Cytoplasmic segment spans residues 529 to 617 (QKGKDIPPLL…NMALEKITHF (89 aa)).

Belongs to the sodium:solute symporter (SSF) (TC 2.A.21) family.

Its subcellular location is the apical cell membrane. It carries out the reaction (S)-lactate(out) + Na(+)(out) = (S)-lactate(in) + Na(+)(in). The catalysed reaction is nicotinate(out) + Na(+)(out) = nicotinate(in) + Na(+)(in). The enzyme catalyses pyruvate(out) + Na(+)(out) = pyruvate(in) + Na(+)(in). It catalyses the reaction propanoate(out) + Na(+)(out) = propanoate(in) + Na(+)(in). It carries out the reaction butanoate(out) + Na(+)(out) = butanoate(in) + Na(+)(in). The catalysed reaction is acetoacetate(out) + Na(+)(out) = acetoacetate(in) + Na(+)(in). Its function is as follows. Acts as an electroneutral and low-affinity sodium (Na(+))-dependent sodium-coupled solute transporter. Catalyzes the transport across the plasma membrane of many monocarboxylates such as lactate, pyruvate, nicotinate, propionate, butyrate and beta-D-hydroxybutyrate. May be responsible for the first step of reabsorption of monocarboxylates from the lumen of the proximal tubule of the kidney and the small intestine. May play also a role in monocarboxylates transport in the retina. Mediates electroneutral uptake of lactate, with a stoichiometry of 2 Na(+) for each lactate. In Bos taurus (Bovine), this protein is Sodium-coupled monocarboxylate transporter 2 (SLC5A12).